A 186-amino-acid polypeptide reads, in one-letter code: ATP synthase subunit delta (186 aa).

This sequence belongs to the ATPase delta chain family. In terms of assembly, F-type ATPases have 2 components, F(1) - the catalytic core - and F(0) - the membrane proton channel. F(1) has five subunits: alpha(3), beta(3), gamma(1), delta(1), epsilon(1). F(0) has three main subunits: a(1), b(2) and c(10-14). The alpha and beta chains form an alternating ring which encloses part of the gamma chain. F(1) is attached to F(0) by a central stalk formed by the gamma and epsilon chains, while a peripheral stalk is formed by the delta and b chains.

The protein resides in the cell inner membrane. In terms of biological role, f(1)F(0) ATP synthase produces ATP from ADP in the presence of a proton or sodium gradient. F-type ATPases consist of two structural domains, F(1) containing the extramembraneous catalytic core and F(0) containing the membrane proton channel, linked together by a central stalk and a peripheral stalk. During catalysis, ATP synthesis in the catalytic domain of F(1) is coupled via a rotary mechanism of the central stalk subunits to proton translocation. Functionally, this protein is part of the stalk that links CF(0) to CF(1). It either transmits conformational changes from CF(0) to CF(1) or is implicated in proton conduction. This is ATP synthase subunit delta from Leptospira interrogans serogroup Icterohaemorrhagiae serovar copenhageni (strain Fiocruz L1-130).